A 461-amino-acid polypeptide reads, in one-letter code: tRNA modification GTPase MnmE (461 aa).

(6S)-5-formyl-5,6,7,8-tetrahydrofolate contacts are provided by lysine 32, glutamate 89, and lysine 128. Residues 224 to 387 (GHALSIVGKP…LGQKISAFFP (164 aa)) enclose the TrmE-type G domain. Asparagine 234 contacts K(+). GTP contacts are provided by residues 234–239 (NAGKSS), 253–259 (SDIKGTT), and 278–281 (DTAG). Serine 238 contributes to the Mg(2+) binding site. 3 residues coordinate K(+): serine 253, isoleucine 255, and threonine 258. Threonine 259 provides a ligand contact to Mg(2+). (6S)-5-formyl-5,6,7,8-tetrahydrofolate is bound at residue lysine 461.

It belongs to the TRAFAC class TrmE-Era-EngA-EngB-Septin-like GTPase superfamily. TrmE GTPase family. Homodimer. Heterotetramer of two MnmE and two MnmG subunits. K(+) is required as a cofactor.

It is found in the cytoplasm. Functionally, exhibits a very high intrinsic GTPase hydrolysis rate. Involved in the addition of a carboxymethylaminomethyl (cmnm) group at the wobble position (U34) of certain tRNAs, forming tRNA-cmnm(5)s(2)U34. The polypeptide is tRNA modification GTPase MnmE (Helicobacter pylori (strain HPAG1)).